The primary structure comprises 401 residues: Elongation factor Tu (401 aa).

The tr-type G domain occupies 10–211; the sequence is KPHLNIGTIG…AVDTYVPNPT (202 aa). The G1 stretch occupies residues 19 to 26; the sequence is GHVDHGKT. 19–26 serves as a coordination point for GTP; that stretch reads GHVDHGKT. Mg(2+) is bound at residue threonine 26. Residues 62–66 are G2; that stretch reads GITIA. The interval 83-86 is G3; the sequence is DCPG. Residues 83–87 and 138–141 contribute to the GTP site; these read DCPGH and NKAD. The segment at 138 to 141 is G4; the sequence is NKAD. The tract at residues 179 to 181 is G5; that stretch reads SAL.

This sequence belongs to the TRAFAC class translation factor GTPase superfamily. Classic translation factor GTPase family. EF-Tu/EF-1A subfamily. Monomer.

The protein localises to the cytoplasm. The enzyme catalyses GTP + H2O = GDP + phosphate + H(+). Its function is as follows. GTP hydrolase that promotes the GTP-dependent binding of aminoacyl-tRNA to the A-site of ribosomes during protein biosynthesis. The sequence is that of Elongation factor Tu from Leptospira biflexa serovar Patoc (strain Patoc 1 / Ames).